Here is a 133-residue protein sequence, read N- to C-terminus: Small ribosomal subunit protein uS8 (133 aa).

Belongs to the universal ribosomal protein uS8 family. Part of the 30S ribosomal subunit. Contacts proteins S5 and S12.

Its function is as follows. One of the primary rRNA binding proteins, it binds directly to 16S rRNA central domain where it helps coordinate assembly of the platform of the 30S subunit. The polypeptide is Small ribosomal subunit protein uS8 (Deinococcus geothermalis (strain DSM 11300 / CIP 105573 / AG-3a)).